Here is a 464-residue protein sequence, read N- to C-terminus: Serine--tRNA synthetase-like protein Slimp (464 aa).

It belongs to the class-II aminoacyl-tRNA synthetase family. Type-1 seryl-tRNA synthetase subfamily.

It is found in the mitochondrion. Functionally, essential protein which may play a role in mitochondrial morphogenesis and function. Has transfer RNA (tRNA)-binding activity and can bind tRNA(Ser) but does not have serine--tRNA ligase activity and does not bind ATP. The sequence is that of Serine--tRNA synthetase-like protein Slimp from Drosophila melanogaster (Fruit fly).